Consider the following 305-residue polypeptide: tRNA uridine(34) hydroxylase (305 aa).

One can recognise a Rhodanese domain in the interval 136–230 (ADENTVVVDK…YLEEVPREQS (95 aa)). Residue Cys-190 is the Cysteine persulfide intermediate of the active site.

The protein belongs to the TrhO family.

The enzyme catalyses uridine(34) in tRNA + AH2 + O2 = 5-hydroxyuridine(34) in tRNA + A + H2O. Functionally, catalyzes oxygen-dependent 5-hydroxyuridine (ho5U) modification at position 34 in tRNAs. The polypeptide is tRNA uridine(34) hydroxylase (Brucella melitensis biotype 1 (strain ATCC 23456 / CCUG 17765 / NCTC 10094 / 16M)).